The following is a 601-amino-acid chain: Elongation factor 4 (601 aa).

Residues 8–189 (EQIRNFGIIA…LIVRKAPPPK (182 aa)) form the tr-type G domain. 20 to 25 (DHGKST) contacts GTP.

The protein belongs to the TRAFAC class translation factor GTPase superfamily. Classic translation factor GTPase family. LepA subfamily.

The protein localises to the cell membrane. It carries out the reaction GTP + H2O = GDP + phosphate + H(+). Required for accurate and efficient protein synthesis under certain stress conditions. May act as a fidelity factor of the translation reaction, by catalyzing a one-codon backward translocation of tRNAs on improperly translocated ribosomes. Back-translocation proceeds from a post-translocation (POST) complex to a pre-translocation (PRE) complex, thus giving elongation factor G a second chance to translocate the tRNAs correctly. Binds to ribosomes in a GTP-dependent manner. In Tropheryma whipplei (strain TW08/27) (Whipple's bacillus), this protein is Elongation factor 4.